A 199-amino-acid chain; its full sequence is Ribosome maturation factor RimM (199 aa).

The PRC barrel domain maps to 93 to 169 (DDEYYHADLI…IELPDEIDGE (77 aa)). Residues 164 to 199 (DEIDGEDRASADESASAEDDAAAPNSARHPRESGDP) are disordered.

This sequence belongs to the RimM family. In terms of assembly, binds ribosomal protein uS19.

It localises to the cytoplasm. In terms of biological role, an accessory protein needed during the final step in the assembly of 30S ribosomal subunit, possibly for assembly of the head region. Essential for efficient processing of 16S rRNA. May be needed both before and after RbfA during the maturation of 16S rRNA. It has affinity for free ribosomal 30S subunits but not for 70S ribosomes. This chain is Ribosome maturation factor RimM, found in Bradyrhizobium sp. (strain ORS 278).